The following is a 475-amino-acid chain: MSVITRFAPSPTGFLHIGSARTALFNWLYAKHTGGKMLLRIEDTDRERSTETALKAIIDGLHWMGLSYDGDPISQFERAERHRQVAKQLVKDGKAYYCYASPEELAEMRENARAEGRPPRYDGRWRDRDISEAPKGVKPVIRIKAPQDGETVLHDRVQGDVRFPNKDLDDFIILRSDGSPTYMHAVVVDDHDMGVTHIIRGDDHLTNAARQTIIFNALGWDIPVMAHIPLIHGENGAKLSKRHGALGVDAYRIMGYLPAALRNYLVRLGWSHGDDELMSIESMIFWFDIDDINKSAARFDLKKLDAINGHYIRMNNDQDLFDAVLNILPEIEGGLEIIERLDEQRRAQFLAAIPNLKERSKTLRELIDNASFIFTKRPLLLDEKAQILLDKNGQAILNGLYLALKACLSWDAKTLDETLRVYAQKQDLKFGDVAQPLRAALTGRVTSPGVFDVLVLLGRDEALNRITDQLVTTAC.

Residues 9-19 carry the 'HIGH' region motif; sequence PSPTGFLHIGS. Positions 238-242 match the 'KMSKS' region motif; that stretch reads KLSKR. Position 241 (lysine 241) interacts with ATP.

This sequence belongs to the class-I aminoacyl-tRNA synthetase family. Glutamate--tRNA ligase type 1 subfamily. In terms of assembly, monomer.

The protein localises to the cytoplasm. It carries out the reaction tRNA(Glu) + L-glutamate + ATP = L-glutamyl-tRNA(Glu) + AMP + diphosphate. Functionally, catalyzes the attachment of glutamate to tRNA(Glu) in a two-step reaction: glutamate is first activated by ATP to form Glu-AMP and then transferred to the acceptor end of tRNA(Glu). This is Glutamate--tRNA ligase 2 from Bartonella quintana (strain Toulouse) (Rochalimaea quintana).